Consider the following 157-residue polypeptide: 6,7-dimethyl-8-ribityllumazine synthase 1 (157 aa).

Residues Phe22, 53–55 (ALE), and 82–84 (TVI) contribute to the 5-amino-6-(D-ribitylamino)uracil site. 87 to 88 (ET) is a (2S)-2-hydroxy-3-oxobutyl phosphate binding site. Catalysis depends on His90, which acts as the Proton donor. 5-amino-6-(D-ribitylamino)uracil is bound at residue Asn115. Arg129 provides a ligand contact to (2S)-2-hydroxy-3-oxobutyl phosphate.

The protein belongs to the DMRL synthase family.

The catalysed reaction is (2S)-2-hydroxy-3-oxobutyl phosphate + 5-amino-6-(D-ribitylamino)uracil = 6,7-dimethyl-8-(1-D-ribityl)lumazine + phosphate + 2 H2O + H(+). The protein operates within cofactor biosynthesis; riboflavin biosynthesis; riboflavin from 2-hydroxy-3-oxobutyl phosphate and 5-amino-6-(D-ribitylamino)uracil: step 1/2. Catalyzes the formation of 6,7-dimethyl-8-ribityllumazine by condensation of 5-amino-6-(D-ribitylamino)uracil with 3,4-dihydroxy-2-butanone 4-phosphate. This is the penultimate step in the biosynthesis of riboflavin. This chain is 6,7-dimethyl-8-ribityllumazine synthase 1, found in Brucella suis biovar 1 (strain 1330).